A 429-amino-acid chain; its full sequence is Probable alcohol acetyltransferase orf1 (429 aa).

It belongs to the alcohol acetyltransferase FCK4 family.

It functions in the pathway secondary metabolite biosynthesis. In terms of biological role, probable alcohol acetyltransferase; part of the gene cluster that mediates the biosynthesis of the glycolipid biosurfactant ustilagic acid (UA). UA is a secreted cellobiose glycolipid that is toxic for many microorganisms and confers biocontrol activity to U.maydis. UA consists of 15,16-dihydroxypalmitic or 2,15,16-trihydroxypalmitic acid, which is O-glycosidically linked to cellobiose at its terminal hydroxyl group. In addition, the cellobiose moiety is acetylated and acylated with a short-chain hydroxy fatty acid. UA biosynthesis starts with omega-hydroxylation of palmitic acid catalyzed by the cytochrome P450 monooxygenase cyp1. Terminal hydroxylation of palmitic acid precedes subterminal hydroxylation catalyzed by the cytochrome P450 monooxygenase cyp2. Sequential glucosylation of the hydroxy fatty acid is probably catalyzed by the glycosyltransferase ugt1. The cellobiose lipid is further decorated by acetylation of the proximal glucose residue and by acylation with a short-chain beta-hydroxy fatty acid at the distal glucose residue. The acyltransferase uat1 may be a good candidate for catalyzing either acetylation or acylation of the cellobiose lipid. The fatty acid synthase fas2 may be involved in synthesis of the carbon backbone of the short-chain beta-hydroxy fatty acid esterified to the cellobiose disaccharide. The secreted UA consists of a mixture of both alpha-hydroxylated and non-hydroxylated glycolipids; therefore, alpha-hydroxylation of the long-chain fatty, catalyzed by the fatty acid hydroxylase ahd1, occurs late in UA biosynthesis and may be the last step before secretion. The polypeptide is Probable alcohol acetyltransferase orf1 (Mycosarcoma maydis (Corn smut fungus)).